Here is a 100-residue protein sequence, read N- to C-terminus: Small ribosomal subunit protein uS14c (100 aa).

A disordered region spans residues Met-1–Ile-31.

This sequence belongs to the universal ribosomal protein uS14 family. In terms of assembly, part of the 30S ribosomal subunit.

The protein localises to the plastid. Its subcellular location is the chloroplast. In terms of biological role, binds 16S rRNA, required for the assembly of 30S particles. In Solanum bulbocastanum (Wild potato), this protein is Small ribosomal subunit protein uS14c.